The sequence spans 177 residues: ATP synthase subunit delta (177 aa).

It belongs to the ATPase delta chain family. As to quaternary structure, F-type ATPases have 2 components, F(1) - the catalytic core - and F(0) - the membrane proton channel. F(1) has five subunits: alpha(3), beta(3), gamma(1), delta(1), epsilon(1). F(0) has three main subunits: a(1), b(2) and c(10-14). The alpha and beta chains form an alternating ring which encloses part of the gamma chain. F(1) is attached to F(0) by a central stalk formed by the gamma and epsilon chains, while a peripheral stalk is formed by the delta and b chains.

The protein resides in the cell inner membrane. Functionally, f(1)F(0) ATP synthase produces ATP from ADP in the presence of a proton or sodium gradient. F-type ATPases consist of two structural domains, F(1) containing the extramembraneous catalytic core and F(0) containing the membrane proton channel, linked together by a central stalk and a peripheral stalk. During catalysis, ATP synthesis in the catalytic domain of F(1) is coupled via a rotary mechanism of the central stalk subunits to proton translocation. In terms of biological role, this protein is part of the stalk that links CF(0) to CF(1). It either transmits conformational changes from CF(0) to CF(1) or is implicated in proton conduction. This Leptothrix cholodnii (strain ATCC 51168 / LMG 8142 / SP-6) (Leptothrix discophora (strain SP-6)) protein is ATP synthase subunit delta.